The following is a 354-amino-acid chain: 4-hydroxy-3-methylbut-2-en-1-yl diphosphate synthase (flavodoxin) (354 aa).

The [4Fe-4S] cluster site is built by C263, C266, C298, and E305.

It belongs to the IspG family. [4Fe-4S] cluster serves as cofactor.

It carries out the reaction (2E)-4-hydroxy-3-methylbut-2-enyl diphosphate + oxidized [flavodoxin] + H2O + 2 H(+) = 2-C-methyl-D-erythritol 2,4-cyclic diphosphate + reduced [flavodoxin]. It participates in isoprenoid biosynthesis; isopentenyl diphosphate biosynthesis via DXP pathway; isopentenyl diphosphate from 1-deoxy-D-xylulose 5-phosphate: step 5/6. Converts 2C-methyl-D-erythritol 2,4-cyclodiphosphate (ME-2,4cPP) into 1-hydroxy-2-methyl-2-(E)-butenyl 4-diphosphate. In Fusobacterium nucleatum subsp. nucleatum (strain ATCC 25586 / DSM 15643 / BCRC 10681 / CIP 101130 / JCM 8532 / KCTC 2640 / LMG 13131 / VPI 4355), this protein is 4-hydroxy-3-methylbut-2-en-1-yl diphosphate synthase (flavodoxin).